Consider the following 287-residue polypeptide: Polyamine aminopropyltransferase (287 aa).

The region spanning 5-238 is the PABS domain; that stretch reads ETWHETLHDH…GIMTFAWASQ (234 aa). Q33 is a binding site for S-methyl-5'-thioadenosine. The spermidine site is built by H64 and D88. S-methyl-5'-thioadenosine-binding positions include E108 and 140–141; that span reads DG. Residue D158 is the Proton acceptor of the active site. 158–161 lines the spermidine pocket; that stretch reads DCTD. S-methyl-5'-thioadenosine is bound at residue P165.

Belongs to the spermidine/spermine synthase family. Homodimer or homotetramer.

Its subcellular location is the cytoplasm. It carries out the reaction S-adenosyl 3-(methylsulfanyl)propylamine + putrescine = S-methyl-5'-thioadenosine + spermidine + H(+). Its pathway is amine and polyamine biosynthesis; spermidine biosynthesis; spermidine from putrescine: step 1/1. Its function is as follows. Catalyzes the irreversible transfer of a propylamine group from the amino donor S-adenosylmethioninamine (decarboxy-AdoMet) to putrescine (1,4-diaminobutane) to yield spermidine. The sequence is that of Polyamine aminopropyltransferase from Sodalis glossinidius (strain morsitans).